The chain runs to 162 residues: Disulfide bond formation protein B (162 aa).

Residues 1–8 are Cytoplasmic-facing; it reads MTPLFRKA. Residues 9–25 form a helical membrane-spanning segment; that stretch reads VWLLFAVSVCAFAGSLA. At 26–43 the chain is on the periplasmic side; it reads AQYVLGMEPCVLCISQRL. C35 and C38 form a disulfide bridge. Residues 44-60 form a helical membrane-spanning segment; the sequence is CVLATALCAAVVLACKP. At 61–67 the chain is on the cytoplasmic side; that stretch reads KGRVGGL. The chain crosses the membrane as a helical span at residues 68–85; that stretch reads SGAVFISIPAVTGISVAA. At 86-141 the chain is on the periplasmic side; sequence YQLWLQSLPPGAAPSCGAPWTFRLKGWPLFDWFEPVVRGFGNCAEPDYLLGVALPV. C101 and C128 are joined by a disulfide. A helical transmembrane segment spans residues 142 to 160; it reads WSAAYFLAVVLTVWWAWAR. Over 161-162 the chain is Cytoplasmic; it reads AK.

The protein belongs to the DsbB family.

The protein localises to the cell inner membrane. Functionally, required for disulfide bond formation in some periplasmic proteins. Acts by oxidizing the DsbA protein. The protein is Disulfide bond formation protein B of Neisseria gonorrhoeae (strain ATCC 700825 / FA 1090).